The primary structure comprises 326 residues: Dehydrogenase/reductase SDR family protein 7-like (326 aa).

At 1–17 (MKVQDMDKCAPSSDWNV) the chain is on the cytoplasmic side. The helical; Signal-anchor for type II membrane protein transmembrane segment at 18–38 (LYWVLGTVLMPVALPLAIINI) threads the bilayer. Topologically, residues 39–326 (WQRFQAQKFR…KLENAEKKST (288 aa)) are peroxisomal. 57–81 (LITGASSGLGESLAHVFYRAGCRVI) provides a ligand contact to NAD(+). Substrate is bound at residue Ser193. The active-site Proton acceptor is Tyr206.

The protein belongs to the short-chain dehydrogenases/reductases (SDR) family.

It localises to the peroxisome membrane. In terms of biological role, putative oxidoreductase. In Drosophila melanogaster (Fruit fly), this protein is Dehydrogenase/reductase SDR family protein 7-like.